Here is a 337-residue protein sequence, read N- to C-terminus: Glyceraldehyde-3-phosphate dehydrogenase (337 aa).

NAD(+) is bound by residues Arg17–Ile18, Asp39, Lys83, and Ser125. D-glyceraldehyde 3-phosphate-binding positions include Ser156–Thr158, Thr187, Arg202, Thr215–Gly216, and Arg238. Cys157 (nucleophile) is an active-site residue. Asn319 lines the NAD(+) pocket.

The protein belongs to the glyceraldehyde-3-phosphate dehydrogenase family. As to quaternary structure, homotetramer.

It is found in the cytoplasm. It carries out the reaction D-glyceraldehyde 3-phosphate + phosphate + NAD(+) = (2R)-3-phospho-glyceroyl phosphate + NADH + H(+). It functions in the pathway carbohydrate degradation; glycolysis; pyruvate from D-glyceraldehyde 3-phosphate: step 1/5. Functionally, catalyzes the oxidative phosphorylation of glyceraldehyde 3-phosphate (G3P) to 1,3-bisphosphoglycerate (BPG) using the cofactor NAD. The first reaction step involves the formation of a hemiacetal intermediate between G3P and a cysteine residue, and this hemiacetal intermediate is then oxidized to a thioester, with concomitant reduction of NAD to NADH. The reduced NADH is then exchanged with the second NAD, and the thioester is attacked by a nucleophilic inorganic phosphate to produce BPG. The chain is Glyceraldehyde-3-phosphate dehydrogenase (gapA) from Mycoplasma pneumoniae (strain ATCC 29342 / M129 / Subtype 1) (Mycoplasmoides pneumoniae).